A 630-amino-acid chain; its full sequence is Arginine--tRNA ligase (630 aa).

The short motif at 120–130 (ANPVHPLHIGH) is the 'HIGH' region element.

It belongs to the class-I aminoacyl-tRNA synthetase family.

The protein localises to the cytoplasm. It catalyses the reaction tRNA(Arg) + L-arginine + ATP = L-arginyl-tRNA(Arg) + AMP + diphosphate. The sequence is that of Arginine--tRNA ligase from Pyrobaculum aerophilum (strain ATCC 51768 / DSM 7523 / JCM 9630 / CIP 104966 / NBRC 100827 / IM2).